Reading from the N-terminus, the 205-residue chain is Large ribosomal subunit protein uL3c (205 aa).

The tract at residues 127–153 (HFSRGPMSHGSKNHRQPGSIGAGTTPG) is disordered.

Belongs to the universal ribosomal protein uL3 family. As to quaternary structure, part of the 50S ribosomal subunit.

It is found in the plastid. It localises to the chloroplast. Functionally, one of the primary rRNA binding proteins, it binds directly near the 3'-end of the 23S rRNA, where it nucleates assembly of the 50S subunit. The chain is Large ribosomal subunit protein uL3c (rpl3) from Porphyra purpurea (Red seaweed).